A 361-amino-acid chain; its full sequence is Septin-1 (361 aa).

The Septin-type G domain occupies 32–304; it reads KGFEFTLMVV…ENYRSDRLAK (273 aa). Positions 42–49 are G1 motif; the sequence is GESGLGKS. GTP is bound by residues 42–49, threonine 76, glycine 102, 181–189, glycine 239, and arginine 254; these read GESGLGKS and KADCLTKKE. The tract at residues 99–102 is G3 motif; it reads DTPG. The interval 180 to 183 is G4 motif; sequence AKAD. Position 319 is a phosphoserine (serine 319).

The protein belongs to the TRAFAC class TrmE-Era-EngA-EngB-Septin-like GTPase superfamily. Septin GTPase family. As to quaternary structure, likely part of a multicomponent septin complex that includes pnut. Interacts with pnut. Interacts with park. Post-translationally, ubiquitinated by park, leading to its degradation by the proteasome. In terms of tissue distribution, accumulates at the leading edge of the cleavage furrow in dividing cells and cellularizing embryos (at protein level). Also accumulates at the leading edge of the embryo epithelium during dorsal closure, in the embryonic neurons, and at the baso-lateral surfaces of ovarian follicle cells (at protein level).

The protein localises to the cytoplasm. Functionally, involved in cytokinesis. May be involved in p53-dependent apoptosis. The chain is Septin-1 from Drosophila melanogaster (Fruit fly).